The sequence spans 126 residues: Adenosine 5'-monophosphoramidase HINT1 (126 aa).

An N-acetylalanine modification is found at Ala2. In terms of domain architecture, HIT spans 18–126 (IFGKIIRKEI…GGRQMHWPPG (109 aa)). N6-acetyllysine is present on residues Lys21 and Lys30. AMP is bound at residue 43-44 (DI). Phosphoserine is present on residues Ser45 and Ser72. AMP contacts are provided by residues Asn99, 105-107 (GQS), and 112-114 (HLH). Positions 110–114 (HVHLH) match the Histidine triad motif motif. His112 (tele-AMP-histidine intermediate) is an active-site residue.

It belongs to the HINT family. Homodimer. Interacts with CDK7. Interacts with RUVBL1 and RUVBL2 and is associated with the LEF1/TCF1-CTNNB1 complex and with a KAT5 histone acetyltransferase complex. Identified in a complex with MITF and CTNNB1. Interacts with CDC34 and RBX1, and is part of a SCF (SKP2-CUL1-F-box protein) E3 ubiquitin-protein ligase complex. Interacts with SUMO1, SUMO2 and RGS17. Interacts with the Ten-1 ICD form of TENM1. Interacts with CALM1; interaction increases in the presence of calcium ions.

It localises to the cytoplasm. It is found in the nucleus. The catalysed reaction is adenosine 5'-phosphoramidate + H2O = AMP + NH4(+). Its function is as follows. Exhibits adenosine 5'-monophosphoramidase activity, hydrolyzing purine nucleotide phosphoramidates with a single phosphate group such as adenosine 5'monophosphoramidate (AMP-NH2) to yield AMP and NH2. Hydrolyzes adenosine 5'monophosphomorpholidate (AMP-morpholidate) and guanosine 5'monophosphomorpholidate (GMP-morpholidate). Hydrolyzes lysyl-AMP (AMP-N-epsilon-(N-alpha-acetyl lysine methyl ester)) generated by lysine tRNA ligase, as well as Met-AMP, His-AMP and Asp-AMP, lysyl-GMP (GMP-N-epsilon-(N-alpha-acetyl lysine methyl ester)) and AMP-N-alanine methyl ester. Can also convert adenosine 5'-O-phosphorothioate and guanosine 5'-O-phosphorothioate to the corresponding nucleoside 5'-O-phosphates with concomitant release of hydrogen sulfide. In addition, functions as a scaffolding protein that modulates transcriptional activation by the LEF1/TCF1-CTNNB1 complex and by the complex formed with MITF and CTNNB1. Modulates p53/TP53 levels and p53/TP53-mediated apoptosis. Modulates proteasomal degradation of target proteins by the SCF (SKP2-CUL1-F-box protein) E3 ubiquitin-protein ligase complex. Also exhibits SUMO-specific isopeptidase activity, deconjugating SUMO1 from RANGAP1 and RGS17. This is Adenosine 5'-monophosphoramidase HINT1 (HINT1) from Pongo abelii (Sumatran orangutan).